Consider the following 114-residue polypeptide: UPF0342 protein NWMN_1737 (114 aa).

Belongs to the UPF0342 family.

The polypeptide is UPF0342 protein NWMN_1737 (Staphylococcus aureus (strain Newman)).